Here is a 595-residue protein sequence, read N- to C-terminus: Inactive metallocarboxypeptidase ecm14 (595 aa).

Residues 1–22 (MYRPDHVFVILCAVFFTGQVTA) form the signal peptide. Residues 23–178 (VPAGTGITHP…MIYESQYPSR (156 aa)) constitute a propeptide that is removed on maturation. Residues 206–527 (NYQPFPVILQ…NSVLVLGHFL (322 aa)) form the Peptidase M14 domain. 2 residues coordinate Zn(2+): histidine 270 and glutamate 273. Substrate contacts are provided by residues 270 to 273 (HARE), arginine 328, and 345 to 346 (DR). Cysteine 339 and cysteine 362 are oxidised to a cystine. Asparagine 386 carries N-linked (GlcNAc...) asparagine glycosylation. Histidine 402 provides a ligand contact to Zn(2+). Substrate is bound at residue 403–404 (SY).

It belongs to the peptidase M14 family. Zn(2+) is required as a cofactor.

It localises to the vacuole. The protein localises to the secreted. Functionally, inactive carboxypeptidase that may play a role in cell wall organization and biogenesis. The sequence is that of Inactive metallocarboxypeptidase ecm14 (ecm14) from Talaromyces marneffei (strain ATCC 18224 / CBS 334.59 / QM 7333) (Penicillium marneffei).